Reading from the N-terminus, the 367-residue chain is 2-aminoethylphosphonate--pyruvate transaminase (367 aa).

At Lys-194 the chain carries N6-(pyridoxal phosphate)lysine.

Belongs to the class-V pyridoxal-phosphate-dependent aminotransferase family. PhnW subfamily. As to quaternary structure, homodimer. Requires pyridoxal 5'-phosphate as cofactor.

It carries out the reaction (2-aminoethyl)phosphonate + pyruvate = phosphonoacetaldehyde + L-alanine. Its function is as follows. Involved in phosphonate degradation. This chain is 2-aminoethylphosphonate--pyruvate transaminase, found in Salmonella agona (strain SL483).